The primary structure comprises 242 residues: Beta-glucanase (242 aa).

An N-terminal signal peptide occupies residues 1-28 (MPYLKRVLLLLVTGLFMSLFAVTATASA). Gln29 carries the pyrrolidone carboxylic acid modification. The GH16 domain occupies 29–242 (QTGGSFFDPF…HYDWVRYTKK (214 aa)). Cys60 and Cys89 are joined by a disulfide. The Nucleophile role is filled by Glu133. The active-site Proton donor is Glu137.

It belongs to the glycosyl hydrolase 16 family.

Its subcellular location is the secreted. The catalysed reaction is Hydrolysis of (1-&gt;4)-beta-D-glucosidic linkages in beta-D-glucans containing (1-&gt;3)- and (1-&gt;4)-bonds.. This Bacillus subtilis (strain 168) protein is Beta-glucanase (bglS).